The chain runs to 231 residues: Large ribosomal subunit protein uL1 (231 aa).

It belongs to the universal ribosomal protein uL1 family. As to quaternary structure, part of the 50S ribosomal subunit.

Its function is as follows. Binds directly to 23S rRNA. The L1 stalk is quite mobile in the ribosome, and is involved in E site tRNA release. Protein L1 is also a translational repressor protein, it controls the translation of the L11 operon by binding to its mRNA. This chain is Large ribosomal subunit protein uL1, found in Acinetobacter baylyi (strain ATCC 33305 / BD413 / ADP1).